Consider the following 343-residue polypeptide: Heat-inducible transcription repressor HrcA (343 aa).

It belongs to the HrcA family.

Its function is as follows. Negative regulator of class I heat shock genes (grpE-dnaK-dnaJ and groELS operons). Prevents heat-shock induction of these operons. This is Heat-inducible transcription repressor HrcA from Thermobifida fusca (strain YX).